The sequence spans 114 residues: Non-specific lipid-transfer protein 1 (114 aa).

A signal peptide spans 1 to 23; sequence MEMVSKIACFVLLCMVVVAPHAE. Disulfide bonds link cysteine 27/cysteine 73, cysteine 37/cysteine 50, cysteine 51/cysteine 96, and cysteine 71/cysteine 110.

Belongs to the plant LTP family.

Functionally, plant non-specific lipid-transfer proteins transfer phospholipids as well as galactolipids across membranes. May play a role in wax or cutin deposition in the cell walls of expanding epidermal cells and certain secretory tissues. The protein is Non-specific lipid-transfer protein 1 (LTP1) of Solanum pennellii (Tomato).